The primary structure comprises 319 residues: Protein sprouty homolog 1 (319 aa).

Met1 is subject to N-acetylmethionine. Positions Thr54–Gln160 are disordered. A compositionally biased stretch (basic and acidic residues) spans Pro69 to Glu79. Low complexity predominate over residues Ser112 to Ser131. The SPR domain occupies Gln183–Cys295.

Belongs to the sprouty family. Forms heterodimers with SPRY2. Interacts with TESK1. Interacts with CAV1 (via C-terminus).

It is found in the cytoplasm. The protein localises to the membrane. Functionally, inhibits fibroblast growth factor (FGF)-induced retinal lens fiber differentiation, probably by inhibiting FGF-mediated phosphorylation of ERK1/2. Inhibits TGFB-induced epithelial-to-mesenchymal transition in lens epithelial cells. The chain is Protein sprouty homolog 1 (SPRY1) from Cervus elaphus (Red deer).